We begin with the raw amino-acid sequence, 1168 residues long: Zinc finger CCHC domain-containing protein 2 (1168 aa).

Disordered stretches follow at residues 1 to 87 (MLRM…GGHA), 209 to 242 (EGSR…CAKL), 561 to 693 (KRSL…LGTE), and 932 to 978 (ATSA…SDST). A compositionally biased stretch (pro residues) spans 43-66 (PPPPPPTGLPRGPPPPPPSPPRGL). Over residues 67–78 (EPPVASGPTAGA) the composition is skewed to low complexity. A compositionally biased stretch (acidic residues) spans 216–227 (EDEPGGDDEQDA). Residues 233–242 (GPEGGGCAKL) show a composition bias toward gly residues. Residues 574–588 (PQVEKEKIKKTENRL) show a composition bias toward basic and acidic residues. Over residues 626–635 (SSESYSSPSS) the composition is skewed to low complexity. Residues 636–655 (PRHDGRESLESEEEKDRDTD) show a composition bias toward basic and acidic residues. The segment covering 932–949 (ATSAQPASTGISPAQSTV) has biased composition (polar residues). Residues 951–965 (PAVPTHTPGPAPSPS) are compositionally biased toward pro residues. A compositionally biased stretch (polar residues) spans 966 to 978 (PALTHSTAQSDST). The segment at 1121-1138 (VSCYNCGVSGHYAQDCKQ) adopts a CCHC-type zinc-finger fold.

The sequence is that of Zinc finger CCHC domain-containing protein 2 (Zcchc2) from Rattus norvegicus (Rat).